A 321-amino-acid polypeptide reads, in one-letter code: Acetylglutamate kinase (321 aa).

Substrate-binding positions include 88-89 (GG), R110, and N216.

The protein belongs to the acetylglutamate kinase family. ArgB subfamily.

It is found in the cytoplasm. It carries out the reaction N-acetyl-L-glutamate + ATP = N-acetyl-L-glutamyl 5-phosphate + ADP. Its pathway is amino-acid biosynthesis; L-arginine biosynthesis; N(2)-acetyl-L-ornithine from L-glutamate: step 2/4. Functionally, catalyzes the ATP-dependent phosphorylation of N-acetyl-L-glutamate. The sequence is that of Acetylglutamate kinase from Ehrlichia chaffeensis (strain ATCC CRL-10679 / Arkansas).